The primary structure comprises 404 residues: MKMTQTVKKVVVAYSGGLDTSVILPWLQENYDNCEIVAFVADVGQGAEELEGIEAKALASGASECYVVDLKDELVENYIYPTLKTGAVYEGTYLLGTSMARPIIAKAQVEIARKVGADALCHGCTGKGNDQIRFESCFAALAPELTVIAPWRIWDLTSRESLLEYLAERDIPTAASATKIYSRDANAWHISHEGGELEDPWNQPSKQVWTMTVDPIDAPNEPEFLTISVVKGEITAVNGEAMSPYNTLMYLNEKAAAHGVGRVDIVENRLVGMKSRGCYETPGGTVMVEALRGIEELVLDKTTRKWKQTVAAEFSHLVYDGRWFTPLCASLLAAAGTLAEEMNGEVIVKMYKGSVQAIQKKSPNSLYSEEFATFGDDNVYDQSHAEGFIRLYSLSSRIKALASK.

ATP contacts are provided by residues 13 to 21 and Ala41; that span reads AYSGGLDTS. Residues Tyr93 and Ser98 each coordinate L-citrulline. Residue Gly123 coordinates ATP. 3 residues coordinate L-aspartate: Thr125, Asn129, and Asp130. Asn129 lines the L-citrulline pocket. Arg133, Ser182, Ser191, Glu267, and Tyr279 together coordinate L-citrulline.

Belongs to the argininosuccinate synthase family. Type 1 subfamily. As to quaternary structure, homotetramer.

The protein resides in the cytoplasm. It carries out the reaction L-citrulline + L-aspartate + ATP = 2-(N(omega)-L-arginino)succinate + AMP + diphosphate + H(+). The protein operates within amino-acid biosynthesis; L-arginine biosynthesis; L-arginine from L-ornithine and carbamoyl phosphate: step 2/3. The polypeptide is Argininosuccinate synthase (Moritella profunda).